The sequence spans 353 residues: DNA polymerase IV (353 aa).

One can recognise a UmuC domain in the interval 6–187; it reads IIHVDCDCFY…LPVSKLHGVG (182 aa). Residues Asp10 and Asp105 each coordinate Mg(2+). Glu106 is an active-site residue.

Belongs to the DNA polymerase type-Y family. As to quaternary structure, monomer. Requires Mg(2+) as cofactor.

It is found in the cytoplasm. The catalysed reaction is DNA(n) + a 2'-deoxyribonucleoside 5'-triphosphate = DNA(n+1) + diphosphate. Its function is as follows. Poorly processive, error-prone DNA polymerase involved in untargeted mutagenesis. Copies undamaged DNA at stalled replication forks, which arise in vivo from mismatched or misaligned primer ends. These misaligned primers can be extended by PolIV. Exhibits no 3'-5' exonuclease (proofreading) activity. May be involved in translesional synthesis, in conjunction with the beta clamp from PolIII. The polypeptide is DNA polymerase IV (Pseudomonas fluorescens (strain Pf0-1)).